The following is a 237-amino-acid chain: Ribonuclease 3 (237 aa).

Residues 4–130 (IQILFQTLNI…LFGAIYLDLG (127 aa)) form the RNase III domain. E45 lines the Mg(2+) pocket. D49 is an active-site residue. Positions 116 and 119 each coordinate Mg(2+). E119 is a catalytic residue. Positions 154–222 (DFKTQLQEIV…AQQALSKVAK (69 aa)) constitute a DRBM domain.

It belongs to the ribonuclease III family. In terms of assembly, homodimer. The cofactor is Mg(2+).

Its subcellular location is the cytoplasm. It carries out the reaction Endonucleolytic cleavage to 5'-phosphomonoester.. In terms of biological role, digests double-stranded RNA. Involved in the processing of primary rRNA transcript to yield the immediate precursors to the large and small rRNAs (23S and 16S). Processes some mRNAs, and tRNAs when they are encoded in the rRNA operon. Processes pre-crRNA and tracrRNA of type II CRISPR loci if present in the organism. This is Ribonuclease 3 from Aster yellows witches'-broom phytoplasma (strain AYWB).